A 138-amino-acid chain; its full sequence is ATP synthase epsilon chain (138 aa).

The protein belongs to the ATPase epsilon chain family. As to quaternary structure, F-type ATPases have 2 components, CF(1) - the catalytic core - and CF(0) - the membrane proton channel. CF(1) has five subunits: alpha(3), beta(3), gamma(1), delta(1), epsilon(1). CF(0) has three main subunits: a, b and c.

It is found in the cellular thylakoid membrane. Functionally, produces ATP from ADP in the presence of a proton gradient across the membrane. This chain is ATP synthase epsilon chain, found in Microcystis aeruginosa (strain NIES-843 / IAM M-2473).